A 253-amino-acid polypeptide reads, in one-letter code: Negative modulator of initiation of replication (253 aa).

The segment at 66–112 is disordered; the sequence is SNQEQQTGHGHAGEPSAVQTPESNDYAKAQPHSSGYQPGQLEGHKSE. Residues 154–155 form an interaction with DNA region; that stretch reads AV.

The protein belongs to the SeqA family. Homodimer. Polymerizes to form helical filaments.

Its subcellular location is the cytoplasm. In terms of biological role, negative regulator of replication initiation, which contributes to regulation of DNA replication and ensures that replication initiation occurs exactly once per chromosome per cell cycle. Binds to pairs of hemimethylated GATC sequences in the oriC region, thus preventing assembly of replication proteins and re-initiation at newly replicated origins. Repression is relieved when the region becomes fully methylated. The chain is Negative modulator of initiation of replication from Shewanella denitrificans (strain OS217 / ATCC BAA-1090 / DSM 15013).